The following is a 428-amino-acid chain: Light-independent protochlorophyllide reductase subunit N (428 aa).

[4Fe-4S] cluster is bound by residues Cys29, Cys54, and Cys115.

Belongs to the BchN/ChlN family. In terms of assembly, protochlorophyllide reductase is composed of three subunits; BchL, BchN and BchB. Forms a heterotetramer of two BchB and two BchN subunits. [4Fe-4S] cluster serves as cofactor.

It catalyses the reaction chlorophyllide a + oxidized 2[4Fe-4S]-[ferredoxin] + 2 ADP + 2 phosphate = protochlorophyllide a + reduced 2[4Fe-4S]-[ferredoxin] + 2 ATP + 2 H2O. It functions in the pathway porphyrin-containing compound metabolism; bacteriochlorophyll biosynthesis (light-independent). Component of the dark-operative protochlorophyllide reductase (DPOR) that uses Mg-ATP and reduced ferredoxin to reduce ring D of protochlorophyllide (Pchlide) to form chlorophyllide a (Chlide). This reaction is light-independent. The NB-protein (BchN-BchB) is the catalytic component of the complex. This Cereibacter sphaeroides (strain ATCC 17023 / DSM 158 / JCM 6121 / CCUG 31486 / LMG 2827 / NBRC 12203 / NCIMB 8253 / ATH 2.4.1.) (Rhodobacter sphaeroides) protein is Light-independent protochlorophyllide reductase subunit N.